Reading from the N-terminus, the 255-residue chain is 1-(5-phosphoribosyl)-5-[(5-phosphoribosylamino)methylideneamino] imidazole-4-carboxamide isomerase (255 aa).

The active-site Proton acceptor is Asp-8. The Proton donor role is filled by Asp-129.

It belongs to the HisA/HisF family.

The protein resides in the cytoplasm. It catalyses the reaction 1-(5-phospho-beta-D-ribosyl)-5-[(5-phospho-beta-D-ribosylamino)methylideneamino]imidazole-4-carboxamide = 5-[(5-phospho-1-deoxy-D-ribulos-1-ylimino)methylamino]-1-(5-phospho-beta-D-ribosyl)imidazole-4-carboxamide. The protein operates within amino-acid biosynthesis; L-histidine biosynthesis; L-histidine from 5-phospho-alpha-D-ribose 1-diphosphate: step 4/9. This chain is 1-(5-phosphoribosyl)-5-[(5-phosphoribosylamino)methylideneamino] imidazole-4-carboxamide isomerase, found in Prochlorococcus marinus subsp. pastoris (strain CCMP1986 / NIES-2087 / MED4).